Reading from the N-terminus, the 350-residue chain is TATA box-binding protein-like 2 (350 aa).

The interval 82 to 150 (ENRDQTVTGN…QPSPETPNSN (69 aa)) is disordered. Over residues 94–116 (ASEESCRTRDRQSQLQLPDEHGS) the composition is skewed to basic and acidic residues. Polar residues-rich tracts occupy residues 118–128 (LNLNSNSSPDP) and 139–150 (SNQPSPETPNSN).

This sequence belongs to the TBP family. Interacts with TAF3. Expressed in myotubes and myofibers (at protein level). Expressed in a wide variety of tissues with highest levels in heart, lung, liver, uterus and placenta and especially the gonads. Expression is higher in the ovary than the testis, and within the ovary expression is localized to the oocytes.

It is found in the cytoplasm. The protein resides in the nucleus. Functionally, transcription factor required in complex with TAF3 for the differentiation of myoblasts into myocytes. The complex replaces TFIID at specific promoters at an early stage in the differentiation process. The chain is TATA box-binding protein-like 2 from Mus musculus (Mouse).